Reading from the N-terminus, the 434-residue chain is Enolase (434 aa).

Gln-163 provides a ligand contact to (2R)-2-phosphoglycerate. Glu-205 (proton donor) is an active-site residue. Residues Asp-242, Glu-291, and Asp-318 each coordinate Mg(2+). Positions 343, 372, 373, and 394 each coordinate (2R)-2-phosphoglycerate. The active-site Proton acceptor is Lys-343.

The protein belongs to the enolase family. Mg(2+) is required as a cofactor.

The protein localises to the cytoplasm. It localises to the secreted. It is found in the cell surface. It catalyses the reaction (2R)-2-phosphoglycerate = phosphoenolpyruvate + H2O. Its pathway is carbohydrate degradation; glycolysis; pyruvate from D-glyceraldehyde 3-phosphate: step 4/5. Its function is as follows. Catalyzes the reversible conversion of 2-phosphoglycerate (2-PG) into phosphoenolpyruvate (PEP). It is essential for the degradation of carbohydrates via glycolysis. This is Enolase from Streptococcus gordonii (strain Challis / ATCC 35105 / BCRC 15272 / CH1 / DL1 / V288).